The primary structure comprises 126 residues: Small ribosomal subunit protein uS13 (126 aa).

The segment at 92–126 (HRMGLPVRGQRTRTNARTRRGRRQTVAGKKKAPGK) is disordered. Positions 101 to 126 (QRTRTNARTRRGRRQTVAGKKKAPGK) are enriched in basic residues.

It belongs to the universal ribosomal protein uS13 family. Part of the 30S ribosomal subunit. Forms a loose heterodimer with protein S19. Forms two bridges to the 50S subunit in the 70S ribosome.

Its function is as follows. Located at the top of the head of the 30S subunit, it contacts several helices of the 16S rRNA. In the 70S ribosome it contacts the 23S rRNA (bridge B1a) and protein L5 of the 50S subunit (bridge B1b), connecting the 2 subunits; these bridges are implicated in subunit movement. Contacts the tRNAs in the A and P-sites. This is Small ribosomal subunit protein uS13 from Nostoc punctiforme (strain ATCC 29133 / PCC 73102).